The chain runs to 399 residues: Acetate kinase (399 aa).

Asn-9 provides a ligand contact to Mg(2+). Residue Lys-16 coordinates ATP. Residue Arg-90 coordinates substrate. Catalysis depends on Asp-147, which acts as the Proton donor/acceptor. ATP contacts are provided by residues 207–211, 282–284, and 330–334; these read HIGNG, DLR, and GVGEN. A Mg(2+)-binding site is contributed by Glu-384.

It belongs to the acetokinase family. In terms of assembly, homodimer. Mg(2+) is required as a cofactor. It depends on Mn(2+) as a cofactor.

Its subcellular location is the cytoplasm. The enzyme catalyses acetate + ATP = acetyl phosphate + ADP. Its pathway is metabolic intermediate biosynthesis; acetyl-CoA biosynthesis; acetyl-CoA from acetate: step 1/2. Its function is as follows. Catalyzes the formation of acetyl phosphate from acetate and ATP. Can also catalyze the reverse reaction. In Staphylococcus saprophyticus subsp. saprophyticus (strain ATCC 15305 / DSM 20229 / NCIMB 8711 / NCTC 7292 / S-41), this protein is Acetate kinase.